The primary structure comprises 458 residues: NADH-ubiquinone oxidoreductase chain 4 (458 aa).

Helical transmembrane passes span 23 to 43, 59 to 79, 99 to 119, 148 to 168, 174 to 194, 197 to 217, 227 to 247, 260 to 280, 289 to 311, 315 to 337, 355 to 375, 396 to 416, and 438 to 458; these read LLWT…TLTL, IDQF…LTIM, LLIL…LLMF, LYFL…LIMI, SLSI…TPWS, LWWI…IFHL, PIAG…YGMI, LAVP…SICL, IAYS…TPWA, ALAM…NITY, FPLM…LPPF, ILLL…MLIM, and LMLM…AIMI.

This sequence belongs to the complex I subunit 4 family.

The protein resides in the mitochondrion membrane. The enzyme catalyses a ubiquinone + NADH + 5 H(+)(in) = a ubiquinol + NAD(+) + 4 H(+)(out). Core subunit of the mitochondrial membrane respiratory chain NADH dehydrogenase (Complex I) that is believed to belong to the minimal assembly required for catalysis. Complex I functions in the transfer of electrons from NADH to the respiratory chain. The immediate electron acceptor for the enzyme is believed to be ubiquinone. The polypeptide is NADH-ubiquinone oxidoreductase chain 4 (MT-ND4) (Petromyzon marinus (Sea lamprey)).